The primary structure comprises 337 residues: UDP-N-acetylenolpyruvoylglucosamine reductase (337 aa).

The 172-residue stretch at 16–187 (ALPGRAARYQ…TSVIFRLAKA (172 aa)) folds into the FAD-binding PCMH-type domain. Residue Arg-160 is part of the active site. Ser-237 functions as the Proton donor in the catalytic mechanism. Residue Glu-333 is part of the active site.

Requires FAD as cofactor.

Its subcellular location is the cytoplasm. It carries out the reaction UDP-N-acetyl-alpha-D-muramate + NADP(+) = UDP-N-acetyl-3-O-(1-carboxyvinyl)-alpha-D-glucosamine + NADPH + H(+). It participates in cell wall biogenesis; peptidoglycan biosynthesis. Its function is as follows. Cell wall formation. The polypeptide is UDP-N-acetylenolpyruvoylglucosamine reductase (Dechloromonas aromatica (strain RCB)).